The primary structure comprises 215 residues: Cytochrome b6 (215 aa).

Residues 32–52 (IFYCLGGITLTCFLVQVATGF) traverse the membrane as a helical segment. C35 contacts heme c. Heme b is bound by residues H86 and H100. 3 helical membrane-spanning segments follow: residues 90–110 (ASMMVLMMILHVFRVYLTGGF), 116–136 (LTWVTGVVLAVLTASFGVTGY), and 186–206 (LHTFVLPLLTAVFMLMHFPMI). The heme b site is built by H187 and H202.

This sequence belongs to the cytochrome b family. PetB subfamily. The 4 large subunits of the cytochrome b6-f complex are cytochrome b6, subunit IV (17 kDa polypeptide, PetD), cytochrome f and the Rieske protein, while the 4 small subunits are PetG, PetL, PetM and PetN. The complex functions as a dimer. It depends on heme b as a cofactor. Requires heme c as cofactor.

The protein resides in the plastid. Its subcellular location is the chloroplast thylakoid membrane. Component of the cytochrome b6-f complex, which mediates electron transfer between photosystem II (PSII) and photosystem I (PSI), cyclic electron flow around PSI, and state transitions. This Helianthus annuus (Common sunflower) protein is Cytochrome b6.